We begin with the raw amino-acid sequence, 1412 residues long: Erbin (1412 aa).

17 LRR repeats span residues 23–44 (TVTT…IFTF), 47–68 (TLEE…LFNC), 70–91 (SLHK…IANL), 93–114 (NLRE…IKNC), 116–137 (VLTI…FSQL), 139–161 (NLTQ…GRLT), 162–183 (KLQI…MNRL), 185–206 (QLER…LEQL), 208–229 (GLKE…IGSL), 231–252 (QLTY…ISTC), 254–275 (NLQD…IGSL), 277–298 (NITT…IGGL), 300–321 (SVEE…IGQL), 323–344 (NLRT…IGSW), 346–367 (NITV…MGDM), 369–391 (KLKV…TKLQ), and 392–413 (QLTA…QKET). Phosphoserine occurs at positions 440 and 444. 2 disordered regions span residues 464-489 (CDED…PYPD) and 506-542 (KDEE…TTTV). Residues 470–480 (EREAPPREGNL) show a composition bias toward basic and acidic residues. Tyrosine 483 carries the post-translational modification Phosphotyrosine. A Phosphothreonine modification is found at threonine 485. The span at 506–532 (KDEETNEDSGRDLKPHEDQQDINKDVG) shows a compositional bias: basic and acidic residues. Over residues 533–542 (VKTSESTTTV) the composition is skewed to low complexity. Phosphoserine occurs at positions 569, 598, 602, 603, and 620. Residues 615–681 (PLIETSINQP…TDSSQDTSLC (67 aa)) are disordered. The segment covering 632–641 (NKKDDTKETD) has biased composition (basic and acidic residues). The segment covering 650–662 (NSNQNNSNCSSPS) has biased composition (low complexity). Residues 663-681 (RMSDSVSLNTDSSQDTSLC) show a composition bias toward polar residues. A Phosphoserine modification is found at serine 715. The disordered stretch occupies residues 803 to 867 (ETEHLENGNK…PQKSGPVGSV (65 aa)). The segment covering 817-835 (ESVNKVNGHSEETSQSPNR) has biased composition (polar residues). Residues serine 852, serine 857, and serine 872 each carry the phosphoserine modification. Threonine 917 is modified (phosphothreonine). Tyrosine 920 carries the phosphotyrosine modification. A Phosphoserine modification is found at serine 931. At tyrosine 972 the chain carries Phosphotyrosine. Disordered regions lie at residues 997–1021 (NPQI…NQSY) and 1075–1192 (QRQS…KSKV). Residues 1075-1086 (QRQSSVSSTASV) are compositionally biased toward polar residues. At tyrosine 1104 the chain carries Phosphotyrosine. A compositionally biased stretch (polar residues) spans 1157–1171 (MSVSDFNYSRTSPSK). Phosphoserine is present on residues serine 1158, serine 1179, and serine 1286. The PDZ domain maps to 1321–1410 (EIRVRVEKDP…TVELIIVREV (90 aa)).

This sequence belongs to the LAP (LRR and PDZ) protein family. As to quaternary structure, interacts with ERBB2, BPAG1 and ITGB4. May favor the localization of ERBB2, by restricting its presence to the basolateral membrane of epithelial cells. Also found to interact with ARVCF and delta catenin. Interacts (via C-terminus) with DST Isoform 3 (via N-terminus). Interacts with NOD2 (via CARD domain). As to expression, highly expressed in brain, heart, kidney, muscle and stomach, followed by liver, spleen and intestine.

The protein localises to the cell junction. It localises to the hemidesmosome. It is found in the nucleus membrane. Its subcellular location is the basolateral cell membrane. Acts as an adapter for the receptor ERBB2, in epithelia. By binding the unphosphorylated 'Tyr-1248' of receptor ERBB2, it may contribute to stabilize this unphosphorylated state. Inhibits NOD2-dependent NF-kappa-B signaling and pro-inflammatory cytokine secretion. The polypeptide is Erbin (Homo sapiens (Human)).